Consider the following 610-residue polypeptide: MCGIVGYAGKKNAESVLVVGLICLEYRGYDSAGIAVLDQGDILVRKSKGKIKDLEAYLREFPAPGNVGIGHTRWATHGEPNQINAHPHTDTNSTVAVVHNGIIENYLELKSQLKKKGHVFQSLTDTEVLPHLLEESKKNGKSNKDSFLELFGKIHGKWAISSVFETEPDRVYFAQDGAPLLIGKGKGEYFLASDISPLTRNCEEVYYVNSGEWGYFSQNEFKLFDFSGKELNPTFKKQELRWEDLDKGGYPHYMIKEIHEQAGIFRKIIQERILENSEIVFPEIKLSKDVLSRVNRIIIQAAGTSYYAGMIGKHYLENFAKIQTDTEASSEFRYRNPVVEGDTLIMGISQSGETADTLASIHEAKAKFIKVVSLVNNVNSTIARESDSYIRTDAGPEIGVASTKAFTAQVLNLLLFSIYMANLKWLISDEEQKILIEEIKLLPAKIDRILAQASKIEEMSSHFTTAKDFIFLGRTYNHPVAMEGALKLKEISYIHASGYAGGEFKHGPIALITNEVPVVCIAPKSEIYTKMVSNIQEIKARKGIIISIVTEGDQEAKSLSDYCFEIPECSEILSPILNVIPLQLLAYYSAIARGCPPDQPRNLAKSVTVE.

Catalysis depends on cysteine 2, which acts as the Nucleophile; for GATase activity. The 218-residue stretch at 2-219 folds into the Glutamine amidotransferase type-2 domain; the sequence is CGIVGYAGKK…SGEWGYFSQN (218 aa). SIS domains are found at residues 287–431 and 459–600; these read SKDV…SDEE and MSSH…PDQP. Catalysis depends on lysine 605, which acts as the For Fru-6P isomerization activity.

Homodimer.

It localises to the cytoplasm. The enzyme catalyses D-fructose 6-phosphate + L-glutamine = D-glucosamine 6-phosphate + L-glutamate. Its function is as follows. Catalyzes the first step in hexosamine metabolism, converting fructose-6P into glucosamine-6P using glutamine as a nitrogen source. This chain is Glutamine--fructose-6-phosphate aminotransferase [isomerizing], found in Leptospira interrogans serogroup Icterohaemorrhagiae serovar copenhageni (strain Fiocruz L1-130).